The following is a 312-amino-acid chain: Protoheme IX farnesyltransferase (312 aa).

The next 8 membrane-spanning stretches (helical) occupy residues 33-53 (VMLLVVFTALVGLIVSPVSIN), 54-74 (PLYGFLAILCIAVGGGGAGAL), 105-125 (FIFGMVLSILSVLIMGSFVNW), 126-146 (FAALFLAFTIFFYIVVYTIWL), 154-174 (IVIGGAAGAFPPMIGWAAATG), 181-201 (FLLFLIIFMWTPPHFWSLSLF), 243-263 (IIGFAGVFYGIFSTVLSIIFI), and 291-311 (FYLAAIFGILLIEFFVWCFII).

It belongs to the UbiA prenyltransferase family. Protoheme IX farnesyltransferase subfamily.

The protein resides in the cell inner membrane. It carries out the reaction heme b + (2E,6E)-farnesyl diphosphate + H2O = Fe(II)-heme o + diphosphate. It functions in the pathway porphyrin-containing compound metabolism; heme O biosynthesis; heme O from protoheme: step 1/1. Functionally, converts heme B (protoheme IX) to heme O by substitution of the vinyl group on carbon 2 of heme B porphyrin ring with a hydroxyethyl farnesyl side group. The sequence is that of Protoheme IX farnesyltransferase from Bartonella henselae (strain ATCC 49882 / DSM 28221 / CCUG 30454 / Houston 1) (Rochalimaea henselae).